Here is an 84-residue protein sequence, read N- to C-terminus: Cytochrome c oxidase subunit 12, mitochondrial (84 aa).

The CHCH domain maps to 27-70 (TKHCWQNYVDYHKCILAKGEDFAPCRQFWLAYRSLCPSGWYQRW). A Cx9C motif motif is present at residues 30–40 (CWQNYVDYHKC). Disulfide bonds link Cys30/Cys62 and Cys40/Cys51. Positions 51–62 (CRQFWLAYRSLC) match the Cx10C motif motif.

This sequence belongs to the cytochrome c oxidase subunit 6B family. In terms of assembly, component of the cytochrome c oxidase (complex IV, CIV), a multisubunit enzyme composed of 11 subunits. The complex is composed of a catalytic core of 3 subunits Cox1, Cox2 and Cox3, encoded in the mitochondrial DNA, and 8 supernumerary subunits Cox4, Cox5a/Cox5, Cox6, Cox7, Cox8, Cox7a/Cox9, Cox6b/Cox12 and Cox6a/Cox13, which are encoded in the nuclear genome. The complex exists as a monomer or a dimer and forms respiratory supercomplexes (SCs) in the inner mitochondrial membrane with NADH-ubiquinone oxidoreductase (complex I, CI) and ubiquinol-cytochrome c oxidoreductase (cytochrome b-c1 complex, complex III, CIII), resulting in various different assemblies (supercomplexes I(1)IV(1), I(1)III(3)IV(2), III(2)IV(1) and III(2)IV(2) as well as larger supercomplexes of compositions like I(1)III(2)IV(5-6)).

It is found in the mitochondrion inner membrane. The protein operates within energy metabolism; oxidative phosphorylation. In terms of biological role, component of the cytochrome c oxidase, the last enzyme in the mitochondrial electron transport chain which drives oxidative phosphorylation. The respiratory chain contains 3 multisubunit complexes succinate dehydrogenase (complex II, CII), ubiquinol-cytochrome c oxidoreductase (cytochrome b-c1 complex, complex III, CIII) and cytochrome c oxidase (complex IV, CIV), that cooperate to transfer electrons derived from NADH and succinate to molecular oxygen, creating an electrochemical gradient over the inner membrane that drives transmembrane transport and the ATP synthase. Cytochrome c oxidase is the component of the respiratory chain that catalyzes the reduction of oxygen to water. Electrons originating from reduced cytochrome c in the intermembrane space (IMS) are transferred via the dinuclear copper A center (CU(A)) of Cox2 and heme A of Cox1 to the active site in Cox1, a binuclear center (BNC) formed by heme A3 and copper B (CU(B)). The BNC reduces molecular oxygen to 2 water molecules using 4 electrons from cytochrome c in the IMS and 4 protons from the mitochondrial matrix. This chain is Cytochrome c oxidase subunit 12, mitochondrial (cox-13), found in Neurospora crassa (strain ATCC 24698 / 74-OR23-1A / CBS 708.71 / DSM 1257 / FGSC 987).